A 181-amino-acid chain; its full sequence is Protein Syd (181 aa).

The protein belongs to the Syd family.

The protein localises to the cell inner membrane. In terms of biological role, interacts with the SecY protein in vivo. May bind preferentially to an uncomplexed state of SecY, thus functioning either as a chelating agent for excess SecY in the cell or as a regulatory factor that negatively controls the translocase function. This is Protein Syd from Escherichia coli O17:K52:H18 (strain UMN026 / ExPEC).